We begin with the raw amino-acid sequence, 334 residues long: Phosphoribosylformylglycinamidine cyclo-ligase (334 aa).

Belongs to the AIR synthase family.

Its subcellular location is the cytoplasm. The enzyme catalyses 2-formamido-N(1)-(5-O-phospho-beta-D-ribosyl)acetamidine + ATP = 5-amino-1-(5-phospho-beta-D-ribosyl)imidazole + ADP + phosphate + H(+). It participates in purine metabolism; IMP biosynthesis via de novo pathway; 5-amino-1-(5-phospho-D-ribosyl)imidazole from N(2)-formyl-N(1)-(5-phospho-D-ribosyl)glycinamide: step 2/2. The sequence is that of Phosphoribosylformylglycinamidine cyclo-ligase from Thermococcus kodakarensis (strain ATCC BAA-918 / JCM 12380 / KOD1) (Pyrococcus kodakaraensis (strain KOD1)).